A 241-amino-acid polypeptide reads, in one-letter code: Polycomb group RING finger protein 3 (241 aa).

The RING-type zinc-finger motif lies at 17–56; sequence CRLCSGYLIDATTVTECLHTFCRSCLVKYLEENNTCPTCR. The tract at residues 115–148 is disordered; the sequence is AKQHLDPRNGETKADDNSNKETAEEKQEEDNDYH. The span at 117 to 139 shows a compositional bias: basic and acidic residues; that stretch reads QHLDPRNGETKADDNSNKETAEE. The segment at 131–241 is interaction with BCORL1; sequence NSNKETAEEK…LHYRPKMDLL (111 aa).

As to quaternary structure, component of a PRC1-like complex that contains PCGF3, RNF2 and RYBP. Interacts with RNF2. Interacts with CBX6, CBX7 and CBX8. Interacts with BCORL1.

The protein localises to the nucleus. It is found in the nucleoplasm. Functionally, component of a Polycomb group (PcG) multiprotein PRC1-like complex, a complex class required to maintain the transcriptionally repressive state of many genes, including Hox genes, throughout development. PcG PRC1 complex acts via chromatin remodeling and modification of histones; it mediates monoubiquitination of histone H2A 'Lys-119', rendering chromatin heritably changed in its expressibility. Within the PRC1-like complex, regulates RNF2 ubiquitin ligase activity. Plays a redundant role with PCGF5 as part of a PRC1-like complex that mediates monoubiquitination of histone H2A 'Lys-119' on the X chromosome and is required for normal silencing of one copy of the X chromosome in XX females. This chain is Polycomb group RING finger protein 3 (PcgF3), found in Mus musculus (Mouse).